The following is a 129-amino-acid chain: Follitropin subunit beta (129 aa).

The signal sequence occupies residues 1–20; that stretch reads MKTVQFCFLFCCWKAICCNS. 6 disulfide bridges follow: Cys21–Cys69, Cys35–Cys84, Cys38–Cys122, Cys46–Cys100, Cys50–Cys102, and Cys105–Cys112. Residues Asn25 and Asn42 are each glycosylated (N-linked (GlcNAc...) asparagine).

Belongs to the glycoprotein hormones subunit beta family. In terms of assembly, heterodimer. The active follitropin is a heterodimer composed of an alpha chain/CGA shared with other hormones and a unique beta chain/FSHB shown here.

It localises to the secreted. Together with the alpha chain CGA constitutes follitropin, the follicle-stimulating hormone, and provides its biological specificity to the hormone heterodimer. Binds FSHR, a G protein-coupled receptor, on target cells to activate downstream signaling pathways. Follitropin is involved in follicle development and spermatogenesis in reproductive organs. In Saimiri boliviensis boliviensis (Bolivian squirrel monkey), this protein is Follitropin subunit beta (FSHB).